We begin with the raw amino-acid sequence, 603 residues long: MDRGSLLPFQLWCPRPFGTYSQNQPRPPSAALKPSACPEPGGGAEPDHGPAHSENTPPALATEVPASQPAPLLSAAAAGDEGRVLLDTWYVIKPGNTKEKVAFFVAHQCGGGSRASSMKVKGHWGSDSSKAKRRRRCLDPTKAPPDPGGREGPPAAEEGPASAGEDVDLLSVAEMVALVEQRAALALQSYPRPTTPAPVVFVSAEQGGPAKGVGSERRSGGGDCSRVAEAVAHFEAQRDSPPTKGLRKEERPGPGPGEVRIAFRISNGREPRAPDSGLPSGGGGRPGCAYPGSPGPGARAKDKITCDLYQLISPSRDALPSNVEFLLARADEASEGDSPAPARPEDTPPAPPPPPARDCGASGFHVDVVVTGVVDECIFFGKDGTKNVKEETVCLTVSPEEPPPPGQLFFLQNRGPDGPPEPPPADSPATAPGPDDAEGTADTSLCRLYRHVSHDFLEIRFKIQRLLEPRQYMLLLPEHVLVKIFSFLPTRALAALKCTCHHFKGIIEAFGVRATDSRWSRDPLYRDDPCKQCRKRYEKGDVSLCRWHPKPYHHDLPYGRSYWMCCRRADRETPGCRLGLHDNNWVLPCNGPGGGRAGREEGR.

Residues Tyr-20–Glu-63 are disordered. A phosphoserine; by ATM mark is found at Ser-21 and Ser-67. Disordered regions lie at residues Gly-111 to Ala-163, Glu-235 to Lys-301, Leu-326 to Gly-360, and Thr-396 to Thr-440. Residues Gly-152–Ala-163 show a composition bias toward low complexity. Ser-338 is modified (phosphoserine). Thr-347 carries the phosphothreonine modification. Composition is skewed to pro residues over residues Thr-347–Ala-356 and Asp-417–Asp-426. In terms of domain architecture, F-box spans Arg-470 to Asp-522.

In terms of assembly, part of a SCF (SKP1-cullin-F-box) protein ligase complex SCF(FBXO46) composed of CUL1, SKP1, RBX1 and FBXO46. In terms of processing, phosphorylated by ATM in response to DNA damage, promoting ubiquitination and degradation by the SCF(FBXO31) complex. ATM-phosphorylated FBXO46 is ubiquitinated and degradaded by the SCF(FBXO31) complex in response to DNA damage.

The protein operates within protein modification; protein ubiquitination. In terms of biological role, substrate-recognition component of the SCF(FBXO46) protein ligase complex, which mediates the ubiquitination and degradation of target proteins. In absence of stress, the SCF(FBXO46) complex catalyzes ubiquitination and degradation of MTOR-phosphorylated FBXO31. This is F-box only protein 46 from Homo sapiens (Human).